Here is a 103-residue protein sequence, read N- to C-terminus: Histone H4.2 (103 aa).

Over residues 1 to 14 the composition is skewed to gly residues; it reads MSGRGKGGKGLGKG. Residues 1 to 20 form a disordered region; that stretch reads MSGRGKGGKGLGKGGAKRHR. At K6 the chain carries N6-acetyl-N6-methyllysine; alternate. 3 positions are modified to N6-methyllysine; alternate: K6, K9, and K13. Residue K13 is modified to N6-acetyl-N6-methyllysine; alternate. Residues 17 to 21 mediate DNA binding; the sequence is KRHRK. Position 92 is an N6-glutaryllysine (K92).

It belongs to the histone H4 family. The nucleosome is a histone octamer containing two molecules each of H2A, H2B, H3 and H4 assembled in one H3-H4 heterotetramer and two H2A-H2B heterodimers. The octamer wraps approximately 147 bp of DNA. Post-translationally, glutarylation at Lys-92 (H4K91glu) destabilizes nucleosomes by promoting dissociation of the H2A-H2B dimers from nucleosomes.

Its subcellular location is the nucleus. The protein resides in the chromosome. Its function is as follows. Core component of nucleosome. Nucleosomes wrap and compact DNA into chromatin, limiting DNA accessibility to the cellular machineries which require DNA as a template. Histones thereby play a central role in transcription regulation, DNA repair, DNA replication and chromosomal stability. DNA accessibility is regulated via a complex set of post-translational modifications of histones, also called histone code, and nucleosome remodeling. The polypeptide is Histone H4.2 (hhfB) (Emericella nidulans (strain FGSC A4 / ATCC 38163 / CBS 112.46 / NRRL 194 / M139) (Aspergillus nidulans)).